Consider the following 1086-residue polypeptide: Fused isobutyryl-CoA mutase (1086 aa).

One can recognise a B12-binding domain in the interval 10-140; that stretch reads HVRFVTASSL…QGMINVMLEE (131 aa). His-23 serves as a coordination point for adenosylcob(III)alamin. Positions 153-407 are GTPase chaperone MeaI; that stretch reads LERLPSGDVQ…FVALVDTINK (255 aa). Position 210 to 215 (210 to 215) interacts with GTP; that stretch reads GAGKSS. Residues Ser-214, Val-238, Asp-239, and Asp-252 each coordinate Mg(2+). Residue Arg-255 participates in GTP binding. 2 residues coordinate Mg(2+): Glu-300 and Thr-301. 347–350 lines the GTP pocket; that stretch reads NKFE. The linker stretch occupies residues 408 to 570; it reads KAGTNWKTSL…YKENVPGSFP (163 aa). Substrate-binding residues include Phe-578, Arg-613, Arg-719, Tyr-763, Ser-812, Arg-847, and Lys-852. 2 residues coordinate GTP: Glu-964 and Asn-1085.

Belongs to the IcmF family. In terms of assembly, homodimer. Adenosylcob(III)alamin serves as cofactor. Mg(2+) is required as a cofactor.

The catalysed reaction is 2-methylpropanoyl-CoA = butanoyl-CoA. It catalyses the reaction 3-methylbutanoyl-CoA = 2,2-dimethylpropanoyl-CoA. The enzyme catalyses GTP + H2O = GDP + phosphate + H(+). Catalyzes the reversible interconversion of isobutyryl-CoA and n-butyryl-CoA, and to a lesser extent, of pivalyl-CoA and isovaleryl-CoA, using radical chemistry. Also exhibits GTPase activity, associated with its G-protein domain (MeaI) that functions as a chaperone that assists cofactor delivery and proper holo-enzyme assembly. Also displays ATPase activity. Is not able to convert 3-hydroxybutyryl-CoA to 2-hydroxyisobutyryl-CoA. Does not exhibit methylmalonyl-CoA mutase (MCM) activity. The chain is Fused isobutyryl-CoA mutase from Geobacillus kaustophilus (strain HTA426).